A 374-amino-acid polypeptide reads, in one-letter code: MQNRRKAFYKLCPNAMPDLSNRLSKKQSKTEKKLHKNIFAHTGPVTIYVDPPSSAVDSALATIDWQDLVDCNSVIQQDAAGGAITQQQDHCLSGEPDFDLQEFRDAVDQFIADQPSLMQPSLGPPEFQLPACNVPVFEPCMTNPLQAQPEHLLPINVQTIPSTEQYWRDVADHNQKALGDALVENNQLQVSLTEKQEEIVSLKEKNIQLNELANQAKHLSSVLDKLMKERTKQNSGATQGRLPVKRSLEDFYPQSNEPDSTQVDEILREISKKCNIALMGSDLSERKRPRLEPMDSMDWQEEGVTEIKMCGAFHGLKTSTGLNSVNLGDTDLEDVSFRTSIKEHSTIRTLAFPQGNAFTIRTSGGGYKFRWVPN.

A coiled-coil region spans residues E164–L212. A disordered region spans residues R230–S260. Residues T330–N374 form a TIRT domain region.

Belongs to the geminin family. As to quaternary structure, component of the EDM complex, at least composed of e2f4, e2f5, mcidas and tfdp1. Expressed in multiciliate differentiating cells. Expression is lost by stage 26, when multiciliate cells in the skin are fully differentiated, but is then detected in the developing nephrostomes of the kidneys where multiciliate cells form at later stages.

The protein resides in the nucleus. Functionally, transcription regulator specifically required for multiciliate cell differentiation. Acts in a multiprotein complex containing E2F4 and E2F5 that binds and activates genes required for centriole biogenesis. Activates genes required for centriole assembly (plk4, cep152) and genes specifically required for motile cilia formation (foxj1). Also promotes the deuterosome pathway of centriole biogenesis by activating expression of ccdc67/deup1, but not its paralog cep63. The protein is Multicilin (mcidas) of Xenopus laevis (African clawed frog).